The following is a 413-amino-acid chain: 1-deoxy-D-xylulose 5-phosphate reductoisomerase (413 aa).

Residues T13, G14, S15, I16, K40, N41, and N127 each contribute to the NADPH site. Residue K128 participates in 1-deoxy-D-xylulose 5-phosphate binding. E129 is a binding site for NADPH. D153 is a binding site for Mn(2+). 1-deoxy-D-xylulose 5-phosphate contacts are provided by S154, E155, S184, and H207. A Mn(2+)-binding site is contributed by E155. NADPH is bound at residue G213. 1-deoxy-D-xylulose 5-phosphate contacts are provided by S220, N225, K226, and E229. E229 contributes to the Mn(2+) binding site.

This sequence belongs to the DXR family. Mg(2+) serves as cofactor. Requires Mn(2+) as cofactor.

The enzyme catalyses 2-C-methyl-D-erythritol 4-phosphate + NADP(+) = 1-deoxy-D-xylulose 5-phosphate + NADPH + H(+). It participates in isoprenoid biosynthesis; isopentenyl diphosphate biosynthesis via DXP pathway; isopentenyl diphosphate from 1-deoxy-D-xylulose 5-phosphate: step 1/6. Functionally, catalyzes the NADPH-dependent rearrangement and reduction of 1-deoxy-D-xylulose-5-phosphate (DXP) to 2-C-methyl-D-erythritol 4-phosphate (MEP). The polypeptide is 1-deoxy-D-xylulose 5-phosphate reductoisomerase (Nitrosomonas eutropha (strain DSM 101675 / C91 / Nm57)).